Consider the following 299-residue polypeptide: Lysine exporter LysO (299 aa).

8 consecutive transmembrane segments (helical) span residues 1–21 (MFSG…IPLR), 31–51 (QLLS…LAFL), 58–78 (LLAI…CNIA), 109–129 (LKLC…LAFL), 131–151 (HATE…GIQL), 169–189 (IVAV…AFIL), 207–227 (SLSG…AAFF), and 277–297 (PAAI…IAFF).

Belongs to the LysO family.

The protein localises to the cell inner membrane. Mediates export of lysine. In Escherichia coli (strain K12), this protein is Lysine exporter LysO.